A 349-amino-acid chain; its full sequence is Histidinol-phosphate aminotransferase (349 aa).

Positions 1 to 22 are disordered; the sequence is MVSIRPSVRHTPAYVPGEQPQT. N6-(pyridoxal phosphate)lysine is present on Lys-207.

The protein belongs to the class-II pyridoxal-phosphate-dependent aminotransferase family. Histidinol-phosphate aminotransferase subfamily. In terms of assembly, homodimer. The cofactor is pyridoxal 5'-phosphate.

It catalyses the reaction L-histidinol phosphate + 2-oxoglutarate = 3-(imidazol-4-yl)-2-oxopropyl phosphate + L-glutamate. Its pathway is amino-acid biosynthesis; L-histidine biosynthesis; L-histidine from 5-phospho-alpha-D-ribose 1-diphosphate: step 7/9. In Synechocystis sp. (strain ATCC 27184 / PCC 6803 / Kazusa), this protein is Histidinol-phosphate aminotransferase (hisC).